A 1373-amino-acid chain; its full sequence is Capping protein, Arp2/3 and myosin-I linker protein 3 (1373 aa).

Residues R126–S151 are disordered. Over residues T138–S151 the composition is skewed to low complexity. LRR repeat units follow at residues S242 to E269, S272 to C299, A333 to S358, C390 to Q417, A422 to G446, L453 to E475, V480 to N507, L510 to L536, D541 to A564, and N568 to K591. Disordered regions lie at residues R864 to D902 and L970 to D1373. Residues P981–G997 are compositionally biased toward pro residues. Residues R1007–D1022 are compositionally biased toward basic and acidic residues. Residues Q1047–S1062 are compositionally biased toward basic residues. The segment covering L1078–P1097 has biased composition (pro residues). A compositionally biased stretch (low complexity) spans S1098–S1108. A compositionally biased stretch (basic and acidic residues) spans R1218 to E1228. A compositionally biased stretch (polar residues) spans P1232–S1243. Positions P1269–V1278 are enriched in pro residues. Residues Q1345 to P1358 are compositionally biased toward basic and acidic residues.

Belongs to the CARMIL family. As to expression, widely expressed, with much higher levels in fetal tissues than in adult ones. Highly expressed in newborn brain.

It is found in the cytoplasm. The protein resides in the cell membrane. The polypeptide is Capping protein, Arp2/3 and myosin-I linker protein 3 (Carmil3) (Rattus norvegicus (Rat)).